The chain runs to 335 residues: Serpentine receptor class gamma-11 (335 aa).

The next 7 membrane-spanning stretches (helical) occupy residues 33–53, 66–86, 98–118, 154–174, 202–222, 242–262, and 271–291; these read FLQIAYLIPGGILNILLLYTI, FFLIYSTDCFVSFSMIFLDII, PIIAPMFYEPLIGFKIMMIVL, LKYLIILVFVIPFSIDWNLII, FQLIFITIALLFTIVCTSVIF, GTAYISMSFIILVVFQFLFAF, and TIFGYSLLSYDILNVGSPIIM.

The protein belongs to the nematode receptor-like protein srg family.

The protein resides in the membrane. This chain is Serpentine receptor class gamma-11 (srg-11), found in Caenorhabditis elegans.